We begin with the raw amino-acid sequence, 159 residues long: Transcriptional repressor NrdR (159 aa).

Residues 3-34 fold into a zinc finger; the sequence is CPFCGAEDTSVVDSRISEEGARIRRRRRCVEC. The 91-residue stretch at 49-139 folds into the ATP-cone domain; it reads PQVIKQDGNR…VYRSFEDVGD (91 aa).

Belongs to the NrdR family. Zn(2+) serves as cofactor.

Functionally, negatively regulates transcription of bacterial ribonucleotide reductase nrd genes and operons by binding to NrdR-boxes. The protein is Transcriptional repressor NrdR of Nitrosomonas europaea (strain ATCC 19718 / CIP 103999 / KCTC 2705 / NBRC 14298).